The sequence spans 239 residues: Ribosomal RNA small subunit methyltransferase G (239 aa).

S-adenosyl-L-methionine contacts are provided by residues glycine 77, phenylalanine 82, 128 to 129, and arginine 147; that span reads AE.

It belongs to the methyltransferase superfamily. RNA methyltransferase RsmG family.

It is found in the cytoplasm. In terms of biological role, specifically methylates the N7 position of guanine in position 535 of 16S rRNA. The chain is Ribosomal RNA small subunit methyltransferase G from Bacillus cereus (strain ZK / E33L).